The chain runs to 84 residues: uncharacterized protein (84 aa).

A helical membrane pass occupies residues 7 to 23 (AFSGVIALYGGYLYLRL).

The protein localises to the membrane. This is an uncharacterized protein from Haemophilus influenzae (strain ATCC 51907 / DSM 11121 / KW20 / Rd).